A 259-amino-acid chain; its full sequence is Phosphate import ATP-binding protein PstB (259 aa).

An ABC transporter domain is found at 11 to 254; that stretch reads AEARNLNFYY…PQDKRTEDYI (244 aa). 43–50 provides a ligand contact to ATP; it reads GPSGCGKS.

The protein belongs to the ABC transporter superfamily. Phosphate importer (TC 3.A.1.7) family. The complex is composed of two ATP-binding proteins (PstB), two transmembrane proteins (PstC and PstA) and a solute-binding protein (PstS).

Its subcellular location is the cell inner membrane. It carries out the reaction phosphate(out) + ATP + H2O = ADP + 2 phosphate(in) + H(+). Part of the ABC transporter complex PstSACB involved in phosphate import. Responsible for energy coupling to the transport system. The protein is Phosphate import ATP-binding protein PstB of Dechloromonas aromatica (strain RCB).